We begin with the raw amino-acid sequence, 89 residues long: MSITAERKSALIKEYATVEGDTGSPEVQVAILTERINNLTEHFKDHKKDNHSRRGLLTMVSSRRSLLDYLKKKDEGRYSKLISSLGIRR.

It belongs to the universal ribosomal protein uS15 family. Part of the 30S ribosomal subunit. Forms a bridge to the 50S subunit in the 70S ribosome, contacting the 23S rRNA.

Functionally, one of the primary rRNA binding proteins, it binds directly to 16S rRNA where it helps nucleate assembly of the platform of the 30S subunit by binding and bridging several RNA helices of the 16S rRNA. Forms an intersubunit bridge (bridge B4) with the 23S rRNA of the 50S subunit in the ribosome. The chain is Small ribosomal subunit protein uS15 from Rhizobium leguminosarum bv. trifolii (strain WSM2304).